Consider the following 321-residue polypeptide: Glucokinase (321 aa).

8–13 (GDVGGT) lines the ATP pocket.

This sequence belongs to the bacterial glucokinase family.

The protein resides in the cytoplasm. It catalyses the reaction D-glucose + ATP = D-glucose 6-phosphate + ADP + H(+). The chain is Glucokinase from Salmonella schwarzengrund (strain CVM19633).